The following is a 165-amino-acid chain: MATNFFIQPITEEAEAYYPPSVITNKRKDLGVDVYCCSDLVLQPGLNIVRLHIKVACEHMGKKCGFKIMARSSMCTYERLLILANGIGLIDPGYVGELMLKIINLGDTPVQIWAKECLVQLVAQGDHVPDHINILKRNQIFPLFAPTPRGEGRFGSTGEAGIMRT.

The protein belongs to the dUTPase family. In terms of assembly, homotrimer. Mg(2+) serves as cofactor.

The protein resides in the host cytoplasm. It localises to the virion. It catalyses the reaction dUTP + H2O = dUMP + diphosphate + H(+). Its function is as follows. The viral dUTPase may play a role in lowering the dUTP concentration in natural infections to minimize misincorporation of deoxyuridine into the viral DNA and ensure the fidelity of genome replication. The sequence is that of Deoxyuridine 5'-triphosphate nucleotidohydrolase from African swine fever virus (isolate Tick/South Africa/Pretoriuskop Pr4/1996) (ASFV).